Reading from the N-terminus, the 315-residue chain is Prephenate dehydratase (315 aa).

A Prephenate dehydratase domain is found at 3–190 (RIAYLGPQGT…ARTRFVLVGR (188 aa)). The region spanning 204–281 (SVALRLPNTP…EDVRYLGSWP (78 aa)) is the ACT domain.

Homodimer.

It catalyses the reaction prephenate + H(+) = 3-phenylpyruvate + CO2 + H2O. It participates in amino-acid biosynthesis; L-phenylalanine biosynthesis; phenylpyruvate from prephenate: step 1/1. The chain is Prephenate dehydratase (pheA) from Mycobacterium sp. (strain KMS).